Here is a 99-residue protein sequence, read N- to C-terminus: Large ribosomal subunit protein uL23c (99 aa).

It belongs to the universal ribosomal protein uL23 family. As to quaternary structure, part of the 50S ribosomal subunit.

The protein resides in the plastid. It localises to the chloroplast. Functionally, binds to 23S rRNA. The chain is Large ribosomal subunit protein uL23c (rpl23) from Emiliania huxleyi (Coccolithophore).